The following is a 225-amino-acid chain: Claudin-8 (225 aa).

Topologically, residues 1–7 are cytoplasmic; that stretch reads MATYALQ. Residues 8–28 traverse the membrane as a helical segment; sequence MAALVLGGVGMVGTVAVTIMP. Over 29–81 the chain is Extracellular; that stretch reads QWRVSAFIESNIVVFENRWEGLWMNCMRHANIRMQCKVYDSLLALSPDLQASR. A helical transmembrane segment spans residues 82–102; that stretch reads GLMCAASVLAFLAFMTAILGM. The Cytoplasmic segment spans residues 103–117; sequence KCTRCTGDDENVKSR. Residues 118–138 traverse the membrane as a helical segment; it reads ILLTAGIIFFITGLVVLIPVS. The Extracellular portion of the chain corresponds to 139-166; that stretch reads WVANSIIRDFYNPLVDVALKRELGEALY. A helical transmembrane segment spans residues 167-187; the sequence is IGWTTALVLIAGGALFCCVFC. Topologically, residues 188-225 are cytoplasmic; the sequence is CTERSNSYRYSVPSHRTTQRSFHAEKRSPSIYSKSQYV. Lysine 213 participates in a covalent cross-link: Glycyl lysine isopeptide (Lys-Gly) (interchain with G-Cter in ubiquitin). Residues 224–225 are interactions with TJP1, TJP2 and TJP3; it reads YV.

Belongs to the claudin family. As to quaternary structure, can form heteropolymeric strands with other claudins. Interacts with CLDN4. Directly interacts with TJP1/ZO-1, TJP2/ZO-2 and TJP3/ZO-3. Interacts with KLHL3. In terms of processing, ubiquitinated by the BCR(KLHL3) E3 ubiquitin ligase complex in the kidney, leading to its degradation. Expressed primarily in lung and kidney. Present in both cortical and medullar collecting ducts (at protein level).

It is found in the cell junction. The protein resides in the tight junction. Its subcellular location is the cell membrane. The catalysed reaction is chloride(in) = chloride(out). It carries out the reaction bromide(in) = bromide(out). The enzyme catalyses iodide(out) = iodide(in). It catalyses the reaction fluoride(in) = fluoride(out). Can associate with other claudins to regulate tight junction structural and functional strand dynamics. May coassemble with CLDN4 into tight junction strands containing anion-selective channels that convey paracellular chloride permeability in renal collecting ducts. Cannot form tight junction strands on its own. The sequence is that of Claudin-8 from Mus musculus (Mouse).